Reading from the N-terminus, the 307-residue chain is Probable acetylxylan esterase A (307 aa).

A signal peptide spans 1-19 (MILLSYLLTYLLCALTCSA). Ser-150 acts as the Charge relay system in catalysis. Residues Asn-192 and Asn-270 are each glycosylated (N-linked (GlcNAc...) asparagine).

This sequence belongs to the carbohydrate esterase 1 (CE1) family. AxeA subfamily. Monomer.

The protein localises to the secreted. The catalysed reaction is Deacetylation of xylans and xylo-oligosaccharides.. Its pathway is glycan degradation; xylan degradation. In terms of biological role, acetylxylan esterase involved in the hydrolysis of xylan, a major structural heterogeneous polysaccharide found in plant biomass representing the second most abundant polysaccharide in the biosphere, after cellulose. Degrades acetylated xylans by cleaving acetyl side groups from the hetero-xylan backbone. The polypeptide is Probable acetylxylan esterase A (axeA) (Aspergillus flavus (strain ATCC 200026 / FGSC A1120 / IAM 13836 / NRRL 3357 / JCM 12722 / SRRC 167)).